Reading from the N-terminus, the 220-residue chain is Glycerol-3-phosphate acyltransferase (220 aa).

A run of 6 helical transmembrane segments spans residues 11-31 (INVI…GYAL), 70-90 (LLVL…SKLF), 96-116 (LQWM…FLNF), 127-147 (GSVV…WFFV), 153-173 (ISSL…FFVP), and 193-213 (MVLI…NLLA).

It belongs to the PlsY family. As to quaternary structure, probably interacts with PlsX.

The protein resides in the cell inner membrane. The enzyme catalyses an acyl phosphate + sn-glycerol 3-phosphate = a 1-acyl-sn-glycero-3-phosphate + phosphate. The protein operates within lipid metabolism; phospholipid metabolism. In terms of biological role, catalyzes the transfer of an acyl group from acyl-phosphate (acyl-PO(4)) to glycerol-3-phosphate (G3P) to form lysophosphatidic acid (LPA). This enzyme utilizes acyl-phosphate as fatty acyl donor, but not acyl-CoA or acyl-ACP. The chain is Glycerol-3-phosphate acyltransferase from Helicobacter pylori (strain ATCC 700392 / 26695) (Campylobacter pylori).